A 197-amino-acid polypeptide reads, in one-letter code: GTP cyclohydrolase 1 (197 aa).

Zn(2+) contacts are provided by Cys-88, His-91, and Cys-160.

Belongs to the GTP cyclohydrolase I family. In terms of assembly, homomer.

It carries out the reaction GTP + H2O = 7,8-dihydroneopterin 3'-triphosphate + formate + H(+). It participates in cofactor biosynthesis; 7,8-dihydroneopterin triphosphate biosynthesis; 7,8-dihydroneopterin triphosphate from GTP: step 1/1. The protein is GTP cyclohydrolase 1 of Clostridium beijerinckii (strain ATCC 51743 / NCIMB 8052) (Clostridium acetobutylicum).